The chain runs to 101 residues: U-scoloptoxin(10)-Sm2a (101 aa).

The first 23 residues, 1–23 (MNKSMIILCAVLFLTYIIEENEA), serve as a signal peptide directing secretion.

The protein belongs to the scoloptoxin-10 family. Post-translationally, contains 3 disulfide bonds. As to expression, expressed by the venom gland.

Its subcellular location is the secreted. The sequence is that of U-scoloptoxin(10)-Sm2a from Scolopendra morsitans (Tanzanian blue ringleg centipede).